Here is an 808-residue protein sequence, read N- to C-terminus: MNFNGFLDDGAGASKLLSDAPYNNHFSFSAVDTMLGSAAIAPSQSLPFSSSGLSLGLQTNGEMSRNGEIMESNVSRKSSRGEDVESRSESDNAEAVSGDDLDTSDRPLKKKKRYHRHTPKQIQDLESVFKECAHPDEKQRLDLSRRLNLDPRQVKFWFQNRRTQMKTQIERHENALLRQENDKLRAENMSVREAMRNPMCGNCGGPAVIGEISMEEQHLRIENSRLKDELDRVCALTGKFLGRSNGSHHIPDSALVLGVGVGSGGCNVGGGFTLSSPLLPQASPRFEISNGTGSGLVATVNRQQPVSVSDFDQRSRYLDLALAAMDELVKMAQTREPLWVRSSDSGFEVLNQEEYDTSFSRCVGPKQDGFVSEASKEAGTVIINSLALVETLMDSERWAEMFPSMVSRTSTTEIISSGMGGRNGALHLMHAELQLLSPLVPVRQVSFLRFCKQHAEGVWAVVDVSIDSIREGSSSSCRRLPSGCLVQDMANGYSKVTWIEHTEYDENHIHRLYRPLLRCGLAFGAHRWMAALQRQCECLTILMSSTVSTSTNPSPINCNGRKSMLKLAKRMTDNFCGGVCASSLQKWSKLNVGNVDEDVRIMTRKSVNNPGEPPGIILNAATSVWMPVSPRRLFDFLGNERLRSEWDILSNGGPMKEMAHIAKGHDRSNSVSLLRASAINANQSSMLILQETSIDAAGAVVVYAPVDIPAMQAVMNGGDSAYVALLPSGFAILPNGQAGTQRCAAEERNSIGNGGCMEEGGSLLTVAFQILVNSLPTAKLTVESVETVNNLISCTVQKIKAALHCDST.

Positions 57–121 (LQTNGEMSRN…KRYHRHTPKQ (65 aa)) are disordered. Residues 79 to 90 (SRGEDVESRSES) are compositionally biased toward basic and acidic residues. Basic residues predominate over residues 108–119 (LKKKKRYHRHTP). A DNA-binding region (homeobox) is located at residues 110-169 (KKKRYHRHTPKQIQDLESVFKECAHPDEKQRLDLSRRLNLDPRQVKFWFQNRRTQMKTQI). The stretch at 158 to 233 (FQNRRTQMKT…SRLKDELDRV (76 aa)) forms a coiled coil. The START domain occupies 310 to 541 (DFDQRSRYLD…LQRQCECLTI (232 aa)).

It belongs to the HD-ZIP homeobox family. Class IV subfamily. As to quaternary structure, interacts with CFL1. Binds with BBM. Expressed in trichomes forming at the base of young leaves, in endodermal cell lines around emergent lateral roots and in the epidermal layer of the stamen filament.

Its subcellular location is the nucleus. Its function is as follows. Probable transcription factor. Promotes cuticle development probably by modulating the expression of the downstream genes BDG and FDH, possibly repressed in a CFL1-dependent manner. Involved, together with PDF2, in the regulation of flower organs development by promoting the expression of APETALA 3 (AP3) in the epidermis and internal cell layers of developing flowers. In opposition to BBM, seems to promote cell differentiation and giant cell identity via transcriptional repression of meristem and cell proliferation genes. This is Homeobox-leucine zipper protein HDG1 from Arabidopsis thaliana (Mouse-ear cress).